The primary structure comprises 1744 residues: Complement C4-A (1744 aa).

A signal peptide spans 1–19 (MRLLWGLIWASSFFTLSLQ). C68 and C97 are joined by a disulfide. An N-linked (GlcNAc...) asparagine glycan is attached at N226. C635 and C669 are oxidised to a cystine. Positions 676 to 679 (RKKR) are excised as a propeptide. Cystine bridges form between C702/C728, C703/C735, and C716/C736. The 35-residue stretch at 702–736 (CCQDGVTRLPMMRSCEQRAARVQQPDCREPFLSCC) folds into the Anaphylatoxin-like domain. A glycan (N-linked (GlcNAc...) asparagine) is linked at N862. S918 is modified (phosphoserine; by FAM20C). The isoglutamyl cysteine thioester (Cys-Gln) cross-link spans 1010–1013 (CGEQ). T1244 is a glycosylation site (O-linked (GalNAc...) threonine). Residue N1328 is glycosylated (N-linked (GlcNAc...) (complex) asparagine). N-linked (GlcNAc...) asparagine glycosylation occurs at N1391. Sulfotyrosine occurs at positions 1417, 1420, and 1422. Residues 1447–1453 (RRNRRRR) constitute a propeptide that is removed on maturation. 5 disulfide bridges follow: C1471/C1535, C1583/C1588, C1595/C1673, C1618/C1742, and C1718/C1727. In terms of domain architecture, NTR spans 1595 to 1742 (CPRQRRALER…FLQEYGTQGC (148 aa)).

As to quaternary structure, complement circulates in blood as a disulfide-linked trimer of an alpha, beta and gamma chain. Complement C4b is composed of complement C4b-A, complement C4 beta and complement C4 gamma chains that are associated via disulfide bonds. Non-enzymatic component of the C3 convertase, also named C4bC2b, composed of the serine protease complement C2b (C2), as well as complement C4b. Non-enzymatic component of the C5 convertase, also named C4bC2bC3b, composed of the serine protease complement C2b (C2), complement C3b, as well as complement C4b. In terms of processing, prior to secretion, the single-chain precursor is enzymatically cleaved by plasminogen (PLG) to yield non-identical chains alpha, beta and gamma. During activation of the complement systems, the alpha chain is cleaved into C4a and C4b by different proteases depending on the complement pathway: C4b stays linked to the beta and gamma chains, while C4a is released in the plasma. The alpha chain is cleaved by C1S to generate C4a and C4b following activation by the classical complement system. The alpha chain is cleaved to generate C4a and C4b by MASP2 following activation by the lectin complement system. The alpha chain is cleaved by GZMK to generate C4a and C4b following activation by the GZMK complement system. Further degradation of C4b by C1 into the inactive fragments C4c and C4d blocks the generation of C3 convertase. The proteolytic cleavages often are incomplete so that many structural forms can be found in plasma. Upon activation, the internal thioester bond reacts with carbohydrate antigens on the target surface to form amide or ester bonds, leading to covalent association with the surface of pathogens. Post-translationally, ser-1236 of complement C4b interacts with complement C3b via a thioester linkage. In terms of processing, N- and O-glycosylated. O-glycosylated with a core 1 or possibly core 8 glycan. As to expression, complement component C4 is expressed at highest levels in the liver, at moderate levels in the adrenal cortex, adrenal medulla, thyroid gland, and the kidney, and at lowest levels in the heart, ovary, small intestine, thymus, pancreas and spleen. The extra-hepatic sites of expression may be important for the local protection and inflammatory response.

The protein resides in the secreted. It is found in the synapse. The protein localises to the cell projection. Its subcellular location is the axon. It localises to the dendrite. The protein resides in the cell surface. Specifically inhibited by nanobody hC4Nb8, inhibiting the classical complement pathway. Specifically inhibited by NbB5, NbE11 and NbH9 nanobodies, and to a lesser extent by NbH11 and NbE3 nanobodies. In terms of biological role, precursor of non-enzymatic components of the classical, lectin and GZMK complement pathways, which consist in a cascade of proteins that leads to phagocytosis and breakdown of pathogens and signaling that strengthens the adaptive immune system. Functionally, non-enzymatic component of C3 and C5 convertases. Generated following cleavage by complement proteases (C1S, MASP2 or GZMK, depending on the complement pathway), it covalently attaches to the surface of pathogens, where it acts as an opsonin that marks the surface of antigens for removal. It then recruits the serine protease complement C2b to form the C3 and C5 convertases, which cleave and activate C3 and C5, respectively, the next components of the complement pathways. Complement C4b-A isotype is responsible for effective binding to form amide bonds with immune aggregates or protein antigens, while complement C4b-B isotype catalyzes the transacylation of the thioester carbonyl group to form ester bonds with carbohydrate antigens. Putative humoral mediator released following cleavage by complement proteases (C1S, MASP2 or GZMK, depending on the complement pathway). While it is strongly similar to anaphylatoxins, its role is unclear. Was reported to act as a mediator of local inflammatory process; however these effects were probably due to contamination with C3a and/C5a anaphylatoxins in biological assays. This Homo sapiens (Human) protein is Complement C4-A.